We begin with the raw amino-acid sequence, 294 residues long: NAD kinase (294 aa).

D73 serves as the catalytic Proton acceptor. Residues D73–G74, N147–E148, H158, R175, D177, and T188–S193 contribute to the NAD(+) site.

The protein belongs to the NAD kinase family. The cofactor is a divalent metal cation.

It is found in the cytoplasm. The catalysed reaction is NAD(+) + ATP = ADP + NADP(+) + H(+). Involved in the regulation of the intracellular balance of NAD and NADP, and is a key enzyme in the biosynthesis of NADP. Catalyzes specifically the phosphorylation on 2'-hydroxyl of the adenosine moiety of NAD to yield NADP. This is NAD kinase from Tolumonas auensis (strain DSM 9187 / NBRC 110442 / TA 4).